Here is a 1149-residue protein sequence, read N- to C-terminus: Probable phospholipid-transporting ATPase IA (1149 aa).

The Cytoplasmic portion of the chain corresponds to 1 to 65 (MPTMRRTVSE…TAKYNIITFL (65 aa)). Ser25 carries the phosphoserine modification. Thr28 is subject to Phosphothreonine. At Ser29 the chain carries Phosphoserine. Residues 66 to 86 (PRFLYSQFRRAANSFFLFIAL) form a helical membrane-spanning segment. Residues 87-92 (LQQIPD) lie on the Extracellular side of the membrane. A helical transmembrane segment spans residues 93–115 (VSPTGRYTTLVPLLFILAVAAIK). Residues 116-297 (EIIEDIKRHK…SNVERITNVQ (182 aa)) are Cytoplasmic-facing. The helical transmembrane segment at 298 to 319 (ILILFCILIAMSLVCSVGSAIW) threads the bilayer. Over 320 to 344 (NRRHSGRDWYLNLNYGGANNFGLNF) the chain is Extracellular. A helical transmembrane segment spans residues 345–366 (LTFIILFNNLIPISLLVTLEVV). The Cytoplasmic portion of the chain corresponds to 367–842 (KFTQAYFINW…GAWNYNRGSK (476 aa)). Asp409 (4-aspartylphosphate intermediate) is an active-site residue. ATP-binding positions include Asp409, Lys410, Thr411, Glu493, Phe534, Lys557, Arg590, Thr670, Gly671, Asp672, 726 to 733 (ALIIDGKT), Arg760, and Lys766. Asp409 lines the Mg(2+) pocket. Thr411 is a Mg(2+) binding site. Residue Asp786 coordinates Mg(2+). Residues Asn789 and Asp790 each coordinate ATP. Asp790 serves as a coordination point for Mg(2+). A helical transmembrane segment spans residues 843–863 (CILYCFYKNIVLYIIEIWFAF). The Extracellular segment spans residues 864–875 (VNGFSGQILFER). Residues 876–895 (WCIGLYNVMFTAMPPLTLGI) traverse the membrane as a helical segment. Residues 896–925 (FERSCRKEYMLKYPELYKTSQNALDFNTKV) are Cytoplasmic-facing. The chain crosses the membrane as a helical span at residues 926–947 (FWVHCLNGLFHSVILFWFPLKA). Topologically, residues 948–961 (LQYGTVFENGRTSD) are extracellular. The helical transmembrane segment at 962–984 (YLLLGNFVYTFVVITVCLKAGLE) threads the bilayer. Over 985–990 (TSYWTW) the chain is Cytoplasmic. Residues 991-1011 (FSHIAIWGSIALWVVFFGIYS) form a helical membrane-spanning segment. Residues 1012 to 1029 (SLWPAVPMAPDMSGEAAM) are Extracellular-facing. A helical transmembrane segment spans residues 1030 to 1055 (LFSSGVFWMGLLFIPVASLLLDVVYK). The Cytoplasmic portion of the chain corresponds to 1056 to 1149 (VIKRTAFKTL…DTTKQRPDEW (94 aa)). 1080–1087 (GAVVLGKS) is a binding site for ATP. Ser1111 carries the post-translational modification Phosphoserine.

It belongs to the cation transport ATPase (P-type) (TC 3.A.3) family. Type IV subfamily. Component of a P4-ATPase flippase complex which consists of a catalytic alpha subunit and an accessory beta subunit. Interacts with TMEM30A to form a flippase complex; this complex forms an intermediate phosphoenzyme. Interacts with TMEM30B; this interaction is reported conflictingly. It depends on Mg(2+) as a cofactor. Post-translationally, cleaved by calpain in a caspase- and calcium influx-dependent manner during platelet apoptosis leading to a 100 kDa polypeptide. As to expression, kidney.

The protein resides in the cytoplasmic vesicle. It is found in the secretory vesicle. It localises to the chromaffin granule membrane. Its subcellular location is the cytoplasmic granule. The protein localises to the cell membrane. The protein resides in the endoplasmic reticulum. It is found in the golgi apparatus. It carries out the reaction ATP + H2O + phospholipidSide 1 = ADP + phosphate + phospholipidSide 2.. The enzyme catalyses a 1,2-diacyl-sn-glycero-3-phospho-L-serine(out) + ATP + H2O = a 1,2-diacyl-sn-glycero-3-phospho-L-serine(in) + ADP + phosphate + H(+). Functionally, catalytic component of a P4-ATPase flippase complex which catalyzes the hydrolysis of ATP coupled to the transport of aminophospholipids from the outer to the inner leaflet of various membranes and ensures the maintenance of asymmetric distribution of phospholipids. Phospholipid translocation also seems to be implicated in vesicle formation and in uptake of lipid signaling molecules. In vitro, its ATPase activity is selectively and stereospecifically stimulated by phosphatidylserine (PS). The flippase complex ATP8A1:TMEM30A seems to play a role in regulation of cell migration probably involving flippase-mediated translocation of phosphatidylethanolamine (PE) at the cell membrane. Acts as aminophospholipid translocase at the cell membrane in neuronal cells. This is Probable phospholipid-transporting ATPase IA from Bos taurus (Bovine).